The primary structure comprises 744 residues: Cullin-1 (744 aa).

One can recognise a Cullin neddylation domain in the interval 674–736 (DRRYAIDASI…RDYLERDKDN (63 aa)).

This sequence belongs to the cullin family. As to quaternary structure, part of a SCF (SKP1-CUL1-F-box protein) E3 ubiquitin-protein ligase complex. Is able to form the SCF complex together with SKP1 and the rice black streaked dwarf virus RBSDV protein P7-2. Interacts with D3. Neddylated (rubylated). Deneddylation occurs upon interaction with the COP9 signalosome (CSN) complex. Expressed in dry seeds and coleoptiles.

Its function is as follows. Involved in ubiquitination and subsequent proteasomal degradation of target proteins. This chain is Cullin-1, found in Oryza sativa subsp. japonica (Rice).